Reading from the N-terminus, the 491-residue chain is MAGALLCALLLLQLLGRGEGKNEELRLYHYLFDTYDPGRRPVQEPEDTVTISLKVTLTNLISLNEKEETLTTSVWIGIDWQDYRLNYSKGDFGGVETLRVPSELVWLPEIVLENNIDGQFGVAYEANVLVSEGGYLSWLPPAIYRSTCAVEVTYFPFDWQNCSLVFRSQTYNAEEVEFVFAVDDEGKTISKIDIDTEAYTENGEWAIDFCPGVIRRHDGDSAGGPGETDVIYSLIIRRKPLFYVINIIVPCVLISGLVLLAYFLPAQAGGQKCTVSINVLLAQTVFLFLIAQKTPETSLSVPLLGRYLIFVMVVATLIVMNCVIVLNVSLRTPTTHAMSPRLRYVLLELLPQLLGSGAPPEIPRAASPPRRASSLGLLLRAEELILKKPRSELVFEQQRHRHGTWTATLCQNLGAAAPEIRCCVDAVNFVASSTRDQEATGEEVSDWVRMGKALDSICFWAALVLFLVGSSLIFLGAYFNRVPQLPYPPCM.

A signal peptide spans M1–G20. Over K21–K239 the chain is Extracellular. 2 N-linked (GlcNAc...) asparagine glycosylation sites follow: N86 and N161. Residues C148 and C162 are joined by a disulfide bond. The chain crosses the membrane as a helical span at residues P240–L264. At P265 to K272 the chain is on the cytoplasmic side. Residues C273–A291 form a helical membrane-spanning segment. The Extracellular portion of the chain corresponds to Q292–R306. A helical membrane pass occupies residues Y307 to V328. Over S329–S456 the chain is Cytoplasmic. Residues I457–N480 traverse the membrane as a helical segment. The Extracellular portion of the chain corresponds to R481 to M491.

Belongs to the ligand-gated ion channel (TC 1.A.9) family. Acetylcholine receptor (TC 1.A.9.1) subfamily. Epsilon/CHRNE sub-subfamily.

Its subcellular location is the postsynaptic cell membrane. The protein resides in the cell membrane. It catalyses the reaction K(+)(in) = K(+)(out). It carries out the reaction Na(+)(in) = Na(+)(out). In terms of biological role, after binding acetylcholine, the AChR responds by an extensive change in conformation that affects all subunits and leads to opening of an ion-conducting channel across the plasma membrane. This chain is Acetylcholine receptor subunit epsilon (CHRNE), found in Bos taurus (Bovine).